The primary structure comprises 210 residues: MTGLFVTLEGPEGAGKSTNRDYLAERLRERGIEVQLTREPGGTPLAERIRELLLAPGDEPMAADTELLLMFAARAQHIAGVIRPALARGAVVLCDRFTDATYAYQGGGRGLPEVRIAALESFVQGDLRPDLTLVFDLPVEIGLARAAARGRLDRFEQEDRRFFEAVRQTYLQRAAQAPERYQVLDAGLPLTEVQAGLDRLLPNLLERLNG.

10-17 (GPEGAGKS) contributes to the ATP binding site.

The protein belongs to the thymidylate kinase family.

It catalyses the reaction dTMP + ATP = dTDP + ADP. Functionally, phosphorylation of dTMP to form dTDP in both de novo and salvage pathways of dTTP synthesis. The polypeptide is Thymidylate kinase (Pseudomonas aeruginosa (strain UCBPP-PA14)).